A 354-amino-acid chain; its full sequence is MRVTDFSFELPESLIAHYPQPERSRCRLLSLEGPTGALTHGTFTDLLDKLNPGDLLVFNNTRVIPARLFGRKASGGKIEVLVERMLDDKRILAHIRASKAPKPGTELLLGDDESIHATMTARHGALFEVEFNDPRPVLDILNAIGHMPLPPYIDRPDEDADRELYQTVYSEKPGAVAAPTAGLHFDEPLLAALREKGVEMAFVTLHVGAGTFQPVRVDTIEDHIMHSEYAEVPQEVVDAVLAAKARGNRVIAVGTTSVRSLESAAQAAKSDLIEPFFGDTQIFIYPGYQYKVIDALITNFHLPESTLIMLVSAFAGYQHTMNAYKTAVEQKYRFFSYGDAMFITYNPRAISERP.

The protein belongs to the QueA family. In terms of assembly, monomer.

It localises to the cytoplasm. It catalyses the reaction 7-aminomethyl-7-carbaguanosine(34) in tRNA + S-adenosyl-L-methionine = epoxyqueuosine(34) in tRNA + adenine + L-methionine + 2 H(+). It functions in the pathway tRNA modification; tRNA-queuosine biosynthesis. Transfers and isomerizes the ribose moiety from AdoMet to the 7-aminomethyl group of 7-deazaguanine (preQ1-tRNA) to give epoxyqueuosine (oQ-tRNA). This chain is S-adenosylmethionine:tRNA ribosyltransferase-isomerase, found in Salmonella paratyphi A (strain ATCC 9150 / SARB42).